The following is a 247-amino-acid chain: uncharacterized protein (247 aa).

The next 3 helical transmembrane spans lie at 108-128 (WYINFIPMFVYGCLDEAFLII), 136-156 (IFSVYNGMSMLASAAVANIIC), and 194-214 (GAKLSGLWMGLTLGMLPLFFI).

It localises to the membrane. This is an uncharacterized protein from Caenorhabditis elegans.